A 142-amino-acid chain; its full sequence is Large ribosomal subunit protein uL13 (142 aa).

Belongs to the universal ribosomal protein uL13 family. As to quaternary structure, part of the 50S ribosomal subunit.

In terms of biological role, this protein is one of the early assembly proteins of the 50S ribosomal subunit, although it is not seen to bind rRNA by itself. It is important during the early stages of 50S assembly. This Pyrococcus horikoshii (strain ATCC 700860 / DSM 12428 / JCM 9974 / NBRC 100139 / OT-3) protein is Large ribosomal subunit protein uL13.